The sequence spans 189 residues: Peptidyl-tRNA hydrolase (189 aa).

TRNA is bound at residue Y15. Residue H20 is the Proton acceptor of the active site. TRNA is bound by residues F66, N68, and N114.

The protein belongs to the PTH family. Monomer.

The protein resides in the cytoplasm. It carries out the reaction an N-acyl-L-alpha-aminoacyl-tRNA + H2O = an N-acyl-L-amino acid + a tRNA + H(+). Functionally, hydrolyzes ribosome-free peptidyl-tRNAs (with 1 or more amino acids incorporated), which drop off the ribosome during protein synthesis, or as a result of ribosome stalling. Catalyzes the release of premature peptidyl moieties from peptidyl-tRNA molecules trapped in stalled 50S ribosomal subunits, and thus maintains levels of free tRNAs and 50S ribosomes. The protein is Peptidyl-tRNA hydrolase of Streptococcus pyogenes serotype M3 (strain ATCC BAA-595 / MGAS315).